Here is a 291-residue protein sequence, read N- to C-terminus: uncharacterized protein (291 aa).

The region spanning 2-62 (KEKEKLIIET…SMLNYYYDKT (61 aa)) is the HTH tetR-type domain. Positions 25–44 (SVQEIAKECKISKGAFYIYF) form a DNA-binding region, H-T-H motif.

This is an uncharacterized protein from Bacillus subtilis (strain 168).